The following is an 84-amino-acid chain: Putative defensin-like protein 101 (84 aa).

The signal sequence occupies residues 1-27 (MDITKNIVTLLLVVLFPILFYYNNVLA). Cystine bridges form between Cys39-Cys81, Cys43-Cys67, Cys52-Cys79, and Cys56-Cys80.

It belongs to the DEFL family.

It is found in the secreted. This chain is Putative defensin-like protein 101, found in Arabidopsis thaliana (Mouse-ear cress).